The following is a 285-amino-acid chain: MRVIIVSGRSGSGKSTALNVLEDNGFFCIDNLPAVLLPELAERALLHTELLEPQVAVSIDARNLPSQLKRFPELLAEVRTRYILCDLLYLDADDKTLLKRFSETRRRHPLTNENRSLAEAIRDEGRLLTPIKDLADLKIDTTHLNLYQLRDTLKLRLLNKPEPGTAFLIESFGFKKGMPVDADLVFDVRCLPNPYWKPDLRDFSGLDQPVADYLAVQPDVEEMYQDILTYLQKWLPRFAASNRAYVTIAIGCTGGHHRSVYLADRLGQALKQSLKNVQVRHRDLC.

8–15 serves as a coordination point for ATP; the sequence is GRSGSGKS. 60 to 63 contributes to the GTP binding site; sequence DARN.

The protein belongs to the RapZ-like family.

Its function is as follows. Displays ATPase and GTPase activities. This is Nucleotide-binding protein Avin_12760 from Azotobacter vinelandii (strain DJ / ATCC BAA-1303).